The following is a 428-amino-acid chain: Enolase (428 aa).

A (2R)-2-phosphoglycerate-binding site is contributed by Q163. Catalysis depends on E205, which acts as the Proton donor. Positions 242, 285, and 312 each coordinate Mg(2+). (2R)-2-phosphoglycerate-binding residues include K337, R366, S367, and K388. K337 acts as the Proton acceptor in catalysis.

This sequence belongs to the enolase family. Requires Mg(2+) as cofactor.

It is found in the cytoplasm. It localises to the secreted. The protein localises to the cell surface. It carries out the reaction (2R)-2-phosphoglycerate = phosphoenolpyruvate + H2O. The protein operates within carbohydrate degradation; glycolysis; pyruvate from D-glyceraldehyde 3-phosphate: step 4/5. Functionally, catalyzes the reversible conversion of 2-phosphoglycerate (2-PG) into phosphoenolpyruvate (PEP). It is essential for the degradation of carbohydrates via glycolysis. This is Enolase from Neisseria gonorrhoeae (strain ATCC 700825 / FA 1090).